The primary structure comprises 260 residues: Homeobox-leucine zipper protein HOX25 (260 aa).

Over residues 1-10 the composition is skewed to acidic residues; that stretch reads MEDLVDELYG. Disordered stretches follow at residues 1–24, 121–145, and 190–221; these read MEDLVDELYGVDEQGSSSAAARKR, ANGKSPSPSPAPAEQTAVPAAPESA, and SPESYFAGARSPPSSSEDDCGGAGSDDDYPSS. Positions 19–79 form a DNA-binding region, homeobox; sequence AAARKRRLTA…NRRARWKTKQ (61 aa). Residues 78-122 form a leucine-zipper region; sequence KQLELDFDRLRAAHDELLAGRAALAADNESLRSQVILLTEKLQAN. The span at 205 to 218 shows a compositional bias: acidic residues; that stretch reads SEDDCGGAGSDDDY.

It belongs to the HD-ZIP homeobox family. Class I subfamily. As to expression, expressed in roots, leaf sheaths and blades and panicles.

The protein localises to the nucleus. In terms of biological role, probable transcription factor. In Oryza sativa subsp. indica (Rice), this protein is Homeobox-leucine zipper protein HOX25 (HOX25).